We begin with the raw amino-acid sequence, 245 residues long: Leucyl/phenylalanyl-tRNA--protein transferase (245 aa).

This sequence belongs to the L/F-transferase family.

The protein resides in the cytoplasm. The catalysed reaction is N-terminal L-lysyl-[protein] + L-leucyl-tRNA(Leu) = N-terminal L-leucyl-L-lysyl-[protein] + tRNA(Leu) + H(+). It catalyses the reaction N-terminal L-arginyl-[protein] + L-leucyl-tRNA(Leu) = N-terminal L-leucyl-L-arginyl-[protein] + tRNA(Leu) + H(+). The enzyme catalyses L-phenylalanyl-tRNA(Phe) + an N-terminal L-alpha-aminoacyl-[protein] = an N-terminal L-phenylalanyl-L-alpha-aminoacyl-[protein] + tRNA(Phe). Functionally, functions in the N-end rule pathway of protein degradation where it conjugates Leu, Phe and, less efficiently, Met from aminoacyl-tRNAs to the N-termini of proteins containing an N-terminal arginine or lysine. The polypeptide is Leucyl/phenylalanyl-tRNA--protein transferase (Paraburkholderia phytofirmans (strain DSM 17436 / LMG 22146 / PsJN) (Burkholderia phytofirmans)).